We begin with the raw amino-acid sequence, 410 residues long: Chloroacetanilide N-alkylformylase, ferredoxin reductase component (410 aa).

The FAD site is built by Gly-14, Asp-36, Lys-49, Val-82, Arg-130, Asp-279, and Val-298.

It belongs to the FAD-dependent oxidoreductase family. The chloroacetanilide N-alkylformylase multicomponent enzyme system is composed of an oxygenase component (CndA) and an electron transfer component formed by a ferredoxin reductase (CndC1) and a ferredoxin (CndB1). In vitro, chloroacetanilide N-alkylformylase assays in which CndB1 is substituted for CndB2 demonstrate that the two enzymes possess nearly identical activities. FAD serves as cofactor.

The enzyme catalyses 2 reduced [2Fe-2S]-[ferredoxin] + NAD(+) + H(+) = 2 oxidized [2Fe-2S]-[ferredoxin] + NADH. Component of the chloroacetanilide N-alkylformylase multicomponent enzyme system involved in the degradation of chloroacetanilide herbicides (N-alkoxyalkyl-N-chloroacetyl-substituted aniline derivatives). In vitro, catalyzes the transfers of electrons from ferredoxin (CndB1) to NADH. N-dealkylase utilizes NADH, but not NADPH, as the electron donor. The sequence is that of Chloroacetanilide N-alkylformylase, ferredoxin reductase component from Rhizorhabdus wittichii (strain DC-6 / KACC 16600) (Sphingomonas wittichii).